We begin with the raw amino-acid sequence, 223 residues long: Cytidylate kinase (223 aa).

Position 10 to 18 (10 to 18 (GPASSGKST)) interacts with ATP.

Belongs to the cytidylate kinase family. Type 1 subfamily.

Its subcellular location is the cytoplasm. It carries out the reaction CMP + ATP = CDP + ADP. The enzyme catalyses dCMP + ATP = dCDP + ADP. This is Cytidylate kinase from Streptococcus pneumoniae serotype 4 (strain ATCC BAA-334 / TIGR4).